Reading from the N-terminus, the 112-residue chain is Tyrosine-protein phosphatase 8 (112 aa).

Residues 1-112 form the Tyrosine-protein phosphatase domain; that stretch reads ENSTAIVMIT…ANSEYGPVVV (112 aa).

This sequence belongs to the protein-tyrosine phosphatase family.

The catalysed reaction is O-phospho-L-tyrosyl-[protein] + H2O = L-tyrosyl-[protein] + phosphate. In Styela plicata (Wrinkled sea squirt), this protein is Tyrosine-protein phosphatase 8 (STY-8).